The chain runs to 1020 residues: Calcium-transporting ATPase sarcoplasmic/endoplasmic reticulum type (1020 aa).

At 1–48 (MEDGHSKTVEQSLNFFGTDPERGLTLDQIKANQKKYGPNELPTEEGKS) the chain is on the cytoplasmic side. Residues 49-69 (IWQLVLEQFDDLLVKILLLAA) traverse the membrane as a helical segment. The Lumenal segment spans residues 70–89 (IISFVLALFEEHEETFTAFV). A helical transmembrane segment spans residues 90 to 110 (EPLVILLILIANAVVGVWQER). The Cytoplasmic segment spans residues 111-253 (NAESAIEALK…EIKTPLQQKL (143 aa)). Ser240 carries the post-translational modification Phosphoserine. The chain crosses the membrane as a helical span at residues 254–273 (DEFGEQLSKVISVICVAVWA). Topologically, residues 274–295 (INIGHFNDPAHGGSWIKGAIYY) are lumenal. A helical transmembrane segment spans residues 296-313 (FKIAVALAVAAIPEGLPA). 4 residues coordinate Ca(2+): Val304, Ala305, Ile307, and Glu309. Over 314–757 (VITTCLALGT…EEGRAIYNNM (444 aa)) the chain is Cytoplasmic. The 4-aspartylphosphate intermediate role is filled by Asp351. Mg(2+) contacts are provided by Asp703 and Asp707. Residues 758-777 (KQFIRYLISSNIGEVVSIFL) form a helical membrane-spanning segment. Positions 768 and 771 each coordinate Ca(2+). The Lumenal portion of the chain corresponds to 778–787 (TAALGLPEAL). A helical transmembrane segment spans residues 788–808 (IPVQLLWVNLVTDGLPATALG). Asn796, Thr799, and Asp800 together coordinate Ca(2+). Over 809–828 (FNPPDLDIMEKPPRKADEGL) the chain is Cytoplasmic. The chain crosses the membrane as a helical span at residues 829–851 (ISGWLFFRYMAIGFYVGAATVGA). At 852-897 (AAWWFVFSDEGPKLSYWQLTHHLSCLGGGDEFKGVDCKIFSDPHAM) the chain is on the lumenal side. A helical transmembrane segment spans residues 898–917 (TMALSVLVTIEMLNAMNSLS). Residue Glu908 coordinates Ca(2+). The Cytoplasmic portion of the chain corresponds to 918–930 (ENQSLITMPPWCN). A helical membrane pass occupies residues 931 to 949 (LWLIGSMALSFTLHFVILY). At 950–964 (VDVLSTVFQVTPLSA) the chain is on the lumenal side. A helical membrane pass occupies residues 965 to 985 (EEWITVMKFSIPVVLLDETLK). Over 986–1020 (FVARKIADGESPIYKMHGIVLMWAVFFGLLYAMML) the chain is Cytoplasmic.

This sequence belongs to the cation transport ATPase (P-type) (TC 3.A.3) family. Interacts with SclA and SclB.

The protein localises to the endoplasmic reticulum membrane. It is found in the sarcoplasmic reticulum membrane. It carries out the reaction Ca(2+)(in) + ATP + H2O = Ca(2+)(out) + ADP + phosphate + H(+). In terms of biological role, this magnesium-dependent enzyme catalyzes the hydrolysis of ATP coupled with the transport of calcium. The chain is Calcium-transporting ATPase sarcoplasmic/endoplasmic reticulum type from Drosophila melanogaster (Fruit fly).